The following is a 2335-amino-acid chain: Pre-mRNA-processing-splicing factor 8 (2335 aa).

Position 2 is an N-acetylalanine (alanine 2). The tract at residues 812–1303 (TTVHWLESRR…KIQTRIKIGL (492 aa)) is reverse transcriptase homology domain. Serine 859 and serine 1358 each carry phosphoserine. Positions 1304–1577 (NSKMPSRFPP…TLKISLIQIF (274 aa)) are linker. Residue lysine 1425 is modified to N6,N6-dimethyllysine. Lysine 1463 bears the N6-acetyllysine mark. Positions 1513 to 1526 (MKWKKLTNAQRSGL) are important for branch point selection. The segment at 1581-1752 (LWQKIHESIV…LRERIRKGLQ (172 aa)) is restriction endonuclease homology domain. Residues 1669 to 2034 (GDYDSHDIER…QIAEIEKQTK (366 aa)) form an involved in interaction with pre-mRNA 5' splice site region. Residues 1767-2020 (NYGELFSNQI…ILGMEISAPS (254 aa)) are RNase H homology domain. The 132-residue stretch at 2103–2234 (TYILPKNVLK…LTAYKLTPSG (132 aa)) folds into the MPN domain. Residues 2301-2335 (PKEFYHEVHRPSHFLNFALLQEGEVYSADREDLYA) form a required for interaction with EFTUD2 and SNRNP200 region.

Part of the U5 snRNP complex. Component of the U4/U6-U5 tri-snRNP complex composed of the U4, U6 and U5 snRNAs and at least PRPF3, PRPF4, PRPF6, PRPF8, PRPF31, SNRNP200, TXNL4A, SNRNP40, DDX23, CD2BP2, PPIH, SNU13, EFTUD2, SART1 and USP39. Component of the U5.U4atac/U6atac snRNP complexes in U12-dependent spliceosomes. Within the minor spliceosome, which acts on U12-type introns, interacts with PPIL2 and RBM48. Core component of U2-type precatalytic, catalytic and postcatalytic spliceosomal complexes. Found in a mRNA splicing-dependent exon junction complex (EJC) with SRRM1. Interacts with U5 snRNP proteins SNRP116 and SNRNP40. Interacts with EFTUD2. Interacts (via the MPN (JAB/Mov34) domain) with PRPF3 ('Lys-63'-linked polyubiquitinated); may stabilize the U4/U6-U5 tri-snRNP complex. Interacts (via RNase H homology domain) with AAR2. Interacts with RPAP3 and URI1 in a ZNHIT2-dependent manner. Interacts with C9orf78. Interacts with SNRNP200; the interaction is direct. Interacts with TSSC4; the interaction is direct. Widely expressed.

The protein localises to the nucleus. Its subcellular location is the nucleus speckle. In terms of biological role, plays a role in pre-mRNA splicing as core component of precatalytic, catalytic and postcatalytic spliceosomal complexes, both of the predominant U2-type spliceosome and the minor U12-type spliceosome. Functions as a scaffold that mediates the ordered assembly of spliceosomal proteins and snRNAs. Required for the assembly of the U4/U6-U5 tri-snRNP complex, a building block of the spliceosome. Functions as a scaffold that positions spliceosomal U2, U5 and U6 snRNAs at splice sites on pre-mRNA substrates, so that splicing can occur. Interacts with both the 5' and the 3' splice site. This Homo sapiens (Human) protein is Pre-mRNA-processing-splicing factor 8 (PRPF8).